The following is a 294-amino-acid chain: Signal peptidase I (294 aa).

Residues 1–59 (MTETTDSPSERQPGPAEPELSSRDPDIAGQVFDAAPFDAAPDADSEGDSKAAKTDEPRP) are disordered. Residues 1–66 (MTETTDSPSE…PRPAKRSTLR (66 aa)) lie on the Cytoplasmic side of the membrane. The segment covering 47-59 (GDSKAAKTDEPRP) has biased composition (basic and acidic residues). The chain crosses the membrane as a helical span at residues 67–87 (EFAVLAVIAVVLYYVMLTFVA). Residues 88–294 (RPYLIPSESM…VRSVNPQQGR (207 aa)) are Extracellular-facing. Active-site residues include serine 96 and lysine 174.

The protein belongs to the peptidase S26 family.

The protein localises to the cell membrane. The enzyme catalyses Cleavage of hydrophobic, N-terminal signal or leader sequences from secreted and periplasmic proteins.. The sequence is that of Signal peptidase I (lepB) from Mycobacterium tuberculosis (strain CDC 1551 / Oshkosh).